Consider the following 1079-residue polypeptide: Electrogenic sodium bicarbonate cotransporter 1 (1079 aa).

The required for interaction with AHCYL1 stretch occupies residues 1–62; it reads MEDEAVLDRG…EKKEKERISE (62 aa). Over 1 to 466 the chain is Cytoplasmic; that stretch reads MEDEAVLDRG…FASDFYDALN (466 aa). Glutamate 2 carries the post-translational modification Phosphoserine. Tyrosine 30 carries the phosphotyrosine modification. Residues 39–52 show a composition bias toward basic residues; the sequence is YRRRRRHKRKAGHK. A disordered region spans residues 39-78; it reads YRRRRRHKRKAGHKEKKEKERISENYSDKSDVENADESSS. The segment covering 53 to 70 has biased composition (basic and acidic residues); it reads EKKEKERISENYSDKSDV. Phosphoserine occurs at positions 61, 65, 68, 223, 232, 233, and 245. A disordered region spans residues 235–266; the sequence is SRMFSNPDNGSPAMTHRNLTSSSLNDISDKPE. 2 positions are modified to phosphothreonine: threonine 249 and threonine 254. Residues 251–260 show a composition bias toward polar residues; the sequence is RNLTSSSLND. A phosphoserine mark is found at serine 256, serine 257, and serine 262. Residues 467-491 form a helical membrane-spanning segment; it reads IQALSAILFIYLATVTNAITFGGLL. The Extracellular segment spans residues 492-501; it reads GDATDNMQGV. A helical transmembrane segment spans residues 502–520; sequence LESFLGTAVSGAIFCLFAG. Residue glutamine 521 is a topological domain, cytoplasmic. The discontinuously helical transmembrane segment at 522–542 threads the bilayer; that stretch reads PLTILSSTGPVLVFERLLFNF. Residues 543 to 550 are Extracellular-facing; sequence SKDHSFDY. Residues 551–571 form a helical membrane-spanning segment; sequence LEFRLWIGLWSAFMCLILVAT. The Cytoplasmic segment spans residues 572–585; it reads DASFLVQYFTRFTE. Residues 586–609 traverse the membrane as a helical segment; it reads EGFSSLISFIFIYDAFKKMIKLAD. N-linked (GlcNAc) asparagine glycans are attached at residues isoleucine 597 and phenylalanine 617. Residues 610-692 are Extracellular-facing; the sequence is YYPINSDFRV…GNNCDFVPDI (83 aa). The helical transmembrane segment at 693-710 threads the bilayer; that stretch reads TLMSFILFLGTYTSSMAM. Over 711 to 725 the chain is Cytoplasmic; the sequence is KKFKTSRYFPTTARK. A helical membrane pass occupies residues 726–745; the sequence is LISDFAIILSILIFCVIDAL. At 746-779 the chain is on the extracellular side; that stretch reads VGVDTPKLIVPSEFKPTSPHRGWFVPPFGGNPWW. Residues 748-779 form an interaction with CA4 region; that stretch reads VDTPKLIVPSEFKPTSPHRGWFVPPFGGNPWW. Residues 780–807 form a helical membrane-spanning segment; the sequence is VCLAAAIPALLVTILIFMDQQITAVIVN. Residues 808–819 are Cytoplasmic-facing; that stretch reads RKEHKLKKGAGY. Residues 820–836 traverse the membrane as a helical segment; sequence HLDLFWVAILMVVCSFM. A topological domain (extracellular) is located at residue alanine 837. Residues 838 to 855 form a discontinuously helical membrane-spanning segment; sequence LPWYVAATVISIAHIDSL. Topologically, residues 856 to 877 are cytoplasmic; the sequence is KMETETSAPGEQPKFLGVREQR. Residues 878-894 traverse the membrane as a helical segment; it reads VTGTLVFILTGLSVFMA. Topologically, residues 895-901 are extracellular; the sequence is PILKFIP. The chain crosses the membrane as a helical span at residues 902–918; it reads MPVLYGVFLYMGVASLN. At 919–960 the chain is on the cytoplasmic side; sequence GVQFMDRLKLLLMPLKHQPDFIYLRHVPLRRVHLFTSLQVLC. An intramembrane region (discontinuously helical) is located at residues 961–986; sequence LALLWILKSTVAAIIFPVMILALVAV. Residues 987 to 1079 are Cytoplasmic-facing; the sequence is RKGMDYLFSQ…STFLERHTSC (93 aa). The segment at 1002-1004 is CA2-binding; it reads LDD. Residues 1012–1079 are disordered; sequence KKKEDEKKKK…STFLERHTSC (68 aa). Phosphoserine occurs at positions 1026 and 1029. Serine 1026 carries the post-translational modification Phosphoserine; by PKA. The interval 1030 to 1033 is CA2-binding; that stretch reads DNDD. A phosphoserine mark is found at serine 1034 and serine 1044. The segment at 1057–1059 is required for basolateral targeting; that stretch reads FLS. Phosphoserine is present on residues aspartate 1060, leucine 1064, serine 1069, and serine 1078. Over residues 1062 to 1079 the composition is skewed to basic and acidic residues; it reads KPLDRERSSTFLERHTSC.

The protein belongs to the anion exchanger (TC 2.A.31) family. In terms of assembly, homodimer. Interacts with CA2/carbonic anhydrase 2 and CA4/carbonic anhydrase 4 which may regulate transporter activity. Isoform 1 but not isoform 2 interacts with AHCYL1 (via PEST domain when phosphorylated); the interaction increases SLC4A4 isoform 1 activity. Interacts with AHCYL2. Post-translationally, phosphorylation of Ser-1026 by PKA increases the binding of CA2 and changes the Na(+):HCO3(-) stoichiometry of the transporter from 3:1 to 2:1. Phosphorylated in presence of STK39 and dephosphorylated in presence of PP1 phosphatase; phosphorylation seems to inhibit SLC4A4 activity. N-glycosylation is not necessary for the transporter basic functions. Specifically expressed in kidney and to a lower extent in liver, lung, spleen, brain, skeletal muscle and heart. In kidney, expressed in proximal tubules at the corticomedullary junction. Isoform 2 is specifically expressed in kidney. Isoform 1 is expressed in kidney and pancreas while isoform 3 is specifically expressed in brain (at protein level). In brain, isoform 1 is expressed in astrocytes while isoform 3 is expressed in neurons (at protein level). In the eye, isoform 1 is expressed in cornea, conjunctiva, lens epithelium, ciliary bodies and retina while isoform 2 is detected only in the conjunctiva.

The protein localises to the basolateral cell membrane. It is found in the cell membrane. It catalyses the reaction 2 hydrogencarbonate(out) + Na(+)(out) = 2 hydrogencarbonate(in) + Na(+)(in). It carries out the reaction 3 hydrogencarbonate(out) + Na(+)(out) = 3 hydrogencarbonate(in) + Na(+)(in). With respect to regulation, inhibited by 4,4'-diisothiocyanatostilbene-2,2'-disulfonic acid (DIDS). In terms of biological role, electrogenic sodium/bicarbonate cotransporter with a Na(+):HCO3(-) stoichiometry varying from 1:2 to 1:3. May regulate bicarbonate influx/efflux at the basolateral membrane of cells and regulate intracellular pH. The sequence is that of Electrogenic sodium bicarbonate cotransporter 1 (Slc4a4) from Rattus norvegicus (Rat).